The primary structure comprises 473 residues: Ribulose bisphosphate carboxylase large chain 2 (473 aa).

Positions 116 and 166 each coordinate substrate. Catalysis depends on Lys168, which acts as the Proton acceptor. Lys170 contacts substrate. Residues Lys194, Asp196, and Glu197 each contribute to the Mg(2+) site. N6-carboxylysine is present on Lys194. The Proton acceptor role is filled by His287. Arg288, His320, and Ser372 together coordinate substrate.

The protein belongs to the RuBisCO large chain family. Type I subfamily. As to quaternary structure, heterohexadecamer of 8 large chains and 8 small chains. The cofactor is Mg(2+).

The catalysed reaction is 2 (2R)-3-phosphoglycerate + 2 H(+) = D-ribulose 1,5-bisphosphate + CO2 + H2O. The enzyme catalyses D-ribulose 1,5-bisphosphate + O2 = 2-phosphoglycolate + (2R)-3-phosphoglycerate + 2 H(+). Functionally, ruBisCO catalyzes two reactions: the carboxylation of D-ribulose 1,5-bisphosphate, the primary event in carbon dioxide fixation, as well as the oxidative fragmentation of the pentose substrate. Both reactions occur simultaneously and in competition at the same active site. The polypeptide is Ribulose bisphosphate carboxylase large chain 2 (Acidithiobacillus ferrooxidans (strain ATCC 23270 / DSM 14882 / CIP 104768 / NCIMB 8455) (Ferrobacillus ferrooxidans (strain ATCC 23270))).